The following is a 222-amino-acid chain: RING finger protein 141 (222 aa).

The RING-type zinc-finger motif lies at 147-184 (CCICMDGKADLILPCAHSFCQKCIDKWSGQSRNCPVCR).

In Danio rerio (Zebrafish), this protein is RING finger protein 141 (rnf141).